The chain runs to 261 residues: MDIVSHQKIRRFEAGTFQEIESSVATEYPLTIYVNDQELVTIVCTPEYLEDLVVGFLTSEGIVRGPRDINSVDIIEATGHAKVSANFVNKFNAKYRGKRYITSCCGKSRENFYFQSDASLVNVKQNGNLQLTTDMIFRLMEKFEQNSATFHQTGGVHNAALCSSAEIIYSRMDIGRHNALDKIYGRALQDGTSTEDKAIIFSGRISSEILVKTAKLGCGIILSRSAPTELAINMAEELNITTVGFIRGDRLNVYSGFERIT.

Cysteine 105 functions as the Cysteine persulfide intermediate in the catalytic mechanism. 245 to 250 serves as a coordination point for Mo-bis(molybdopterin guanine dinucleotide); that stretch reads FIRGDR.

The protein belongs to the FdhD family.

The protein resides in the cytoplasm. In terms of biological role, required for formate dehydrogenase (FDH) activity. Acts as a sulfur carrier protein that transfers sulfur from IscS to the molybdenum cofactor prior to its insertion into FDH. The protein is Sulfur carrier protein FdhD of Listeria monocytogenes serovar 1/2a (strain ATCC BAA-679 / EGD-e).